A 154-amino-acid polypeptide reads, in one-letter code: Insulin-like growth factor 1 (154 aa).

The interval 50–78 is b; it reads GPETLCGAELVDALQFVCGDRGFYFNKPT. 3 disulfide bridges follow: cysteine 55-cysteine 97, cysteine 67-cysteine 110, and cysteine 96-cysteine 101. Residues 79 to 90 are c; that stretch reads GYGSSSRRAPQT. The tract at residues 91–111 is a; sequence GIVDECCFRSCDLRRLEMYCA. Positions 112–119 are d; the sequence is PLKPAKSA. The propeptide at 120–154 is e peptide; that stretch reads RSVRAQRHTDMPKAQKEVHLKNTSRGSAGNKNYRM. Positions 121–154 are disordered; it reads SVRAQRHTDMPKAQKEVHLKNTSRGSAGNKNYRM. Residues 126-139 are compositionally biased toward basic and acidic residues; the sequence is RHTDMPKAQKEVHL. Positions 140–154 are enriched in polar residues; the sequence is KNTSRGSAGNKNYRM.

It belongs to the insulin family. Forms a ternary complex with IGFR1 and ITGAV:ITGB3. Forms a ternary complex with IGFR1 and ITGA6:ITGB4. Forms a ternary complex with IGFBP3 and ALS.

The protein resides in the secreted. The insulin-like growth factors, isolated from plasma, are structurally and functionally related to insulin but have a much higher growth-promoting activity. May be a physiological regulator of [1-14C]-2-deoxy-D-glucose (2DG) transport and glycogen synthesis in osteoblasts. Stimulates glucose transport in bone-derived osteoblastic (PyMS) cells and is effective at much lower concentrations than insulin, not only regarding glycogen and DNA synthesis but also with regard to enhancing glucose uptake. May play a role in synapse maturation. Ca(2+)-dependent exocytosis of IGF1 is required for sensory perception of smell in the olfactory bulb. Acts as a ligand for IGF1R. Binds to the alpha subunit of IGF1R, leading to the activation of the intrinsic tyrosine kinase activity which autophosphorylates tyrosine residues in the beta subunit thus initiating a cascade of down-stream signaling events leading to activation of the PI3K-AKT/PKB and the Ras-MAPK pathways. Binds to integrins ITGAV:ITGB3 and ITGA6:ITGB4. Its binding to integrins and subsequent ternary complex formation with integrins and IGFR1 are essential for IGF1 signaling. Induces the phosphorylation and activation of IGFR1, MAPK3/ERK1, MAPK1/ERK2 and AKT1. As part of the MAPK/ERK signaling pathway, acts as a negative regulator of apoptosis in cardiomyocytes via promotion of STUB1/CHIP-mediated ubiquitination and degradation of ICER-type isoforms of CREM. The sequence is that of Insulin-like growth factor 1 from Bos taurus (Bovine).